A 509-amino-acid chain; its full sequence is MSNRQTSTDVILIGAGIMSATLGTLLKELAPEWEIKVFEKLGKPGEESSNEWNNAGTGHAALCELNYTPEKPDGSIDISKAIRINEQFQVSKQFWAYLVKNNLLQNPQEFIRPLPHISLVQGENNVRFLKKRFEALSNNPLFQGMEFSDDPEKLKEWMPLIMEGRTSNEPIAATKIDSGTDVNFGALTRMLFDHLKRKGVEINYKHSVKDIKRTSDGLWELKVKDLNSGSVEIHKAKFVFIGAGGGSLHLLQKSGIPEGKHIGGFPVSGLFMVCNNPKVVEKHHAKVYGKAKIGAPPMSVPHLDTRYIDNKKMLLFGPFAGFSPKFLKNGSNMDLFASVKLHNLGTLLASAFKNFSLEKYLIQQLMLTKEKRMEELREFVPTAKSEDWDIVIAGQRVQIIKDTEAGGKGTIQFGTEVVSAADGSIAALLGASPGASTAVHVMLEVLKKCFPQHMKEWEPKIKEMIPSYGVSLAKNPDLFQKLHDSTAETLGLNEKEPVSGASEKELVYS.

Residues 490–509 (LGLNEKEPVSGASEKELVYS) are disordered. The span at 493–509 (NEKEPVSGASEKELVYS) shows a compositional bias: basic and acidic residues.

The protein belongs to the MQO family. Requires FAD as cofactor.

It catalyses the reaction (S)-malate + a quinone = a quinol + oxaloacetate. The protein operates within carbohydrate metabolism; tricarboxylic acid cycle; oxaloacetate from (S)-malate (quinone route): step 1/1. In Geobacillus sp. (strain WCH70), this protein is Probable malate:quinone oxidoreductase.